Reading from the N-terminus, the 474-residue chain is Trehalose-6-phosphate synthase (474 aa).

Arg10 contributes to the D-glucose 6-phosphate binding site. 22-23 (GG) lines the UDP-alpha-D-glucose pocket. D-glucose 6-phosphate is bound by residues Tyr77 and Asp131. Residues Arg263 and Lys268 each coordinate UDP-alpha-D-glucose. Arg301 contributes to the D-glucose 6-phosphate binding site. Residues Phe340 and 366 to 370 (LVAKE) contribute to the UDP-alpha-D-glucose site.

The protein belongs to the glycosyltransferase 20 family. As to quaternary structure, homotetramer.

The catalysed reaction is D-glucose 6-phosphate + UDP-alpha-D-glucose = alpha,alpha-trehalose 6-phosphate + UDP + H(+). The protein operates within glycan biosynthesis; trehalose biosynthesis. Functionally, probably involved in the osmoprotection via the biosynthesis of trehalose. Catalyzes the transfer of glucose from UDP-alpha-D-glucose (UDP-Glc) to D-glucose 6-phosphate (Glc-6-P) to form trehalose-6-phosphate. Acts with retention of the anomeric configuration of the UDP-sugar donor. This chain is Trehalose-6-phosphate synthase, found in Escherichia coli O6:K15:H31 (strain 536 / UPEC).